The primary structure comprises 558 residues: Putative transport protein VC0395_A0715/VC395_1212 (558 aa).

The next 5 helical transmembrane spans lie at 5 to 25, 37 to 57, 66 to 86, 92 to 112, and 164 to 184; these read VVLLLEQNPILLIFVVLAIGL, LGNSIGVLITSLIMGHLGFSF, FMLFIYCVGIEAGPNFFGIFF, YLILSLVVLITATWIAYFGGY, and VGYAMAYLIGLISMIMFAKLL. RCK C-terminal domains follow at residues 203 to 290 and 291 to 374; these read RGLG…FRNG and KEVF…KIGF. The next 6 helical transmembrane spans lie at 384–404, 407–427, 441–461, 476–496, 504–524, and 537–557; these read LLAFCSFFILGILFGLVTMTF, VSFSLGNAVGLLLSGITLGFL, ALNMVKDLGLAIFMVGIGLNA, VIGLAFLVSVVPVVFAYLVGA, ALLFGAIIGARTCAPAMDVVN, and AGTYAIANILMTLTGTIFILL.

The protein belongs to the AAE transporter (TC 2.A.81) family. YbjL subfamily.

It is found in the cell membrane. The polypeptide is Putative transport protein VC0395_A0715/VC395_1212 (Vibrio cholerae serotype O1 (strain ATCC 39541 / Classical Ogawa 395 / O395)).